Reading from the N-terminus, the 141-residue chain is Hemoglobin subunit alpha-D (141 aa).

The 141-residue stretch at 1–141 (MLTAEDKKLI…VAAVLAEKYR (141 aa)) folds into the Globin domain. Residues His58 and His87 each coordinate heme b.

Belongs to the globin family. Heterotetramer of two alpha-D chains and two beta chains. As to expression, red blood cells.

Functionally, involved in oxygen transport from the lung to the various peripheral tissues. This is Hemoglobin subunit alpha-D (HBAD) from Accipiter gentilis (Northern goshawk).